We begin with the raw amino-acid sequence, 401 residues long: L-rhamnonate dehydratase (401 aa).

Positions 29 and 55 each coordinate substrate. Mg(2+) is bound by residues D222, E248, and E276. Residue H325 is the Proton acceptor of the active site. E345 lines the substrate pocket.

It belongs to the mandelate racemase/muconate lactonizing enzyme family. RhamD subfamily. Homooctamer; tetramer of dimers. Requires Mg(2+) as cofactor.

It carries out the reaction L-rhamnonate = 2-dehydro-3-deoxy-L-rhamnonate + H2O. In terms of biological role, catalyzes the dehydration of L-rhamnonate to 2-keto-3-deoxy-L-rhamnonate (KDR). The sequence is that of L-rhamnonate dehydratase from Klebsiella pneumoniae (strain 342).